Reading from the N-terminus, the 353-residue chain is Aliphatic aldoxime dehydratase (353 aa).

Position 219 (Ser-219) interacts with an aliphatic aldoxime. His-299 contacts heme b. An an aliphatic aldoxime-binding site is contributed by His-320. His-320 is an active-site residue.

It belongs to the heme-containing dehydratase family. As to quaternary structure, homodimer. It depends on heme b as a cofactor.

It carries out the reaction an aliphatic aldoxime = a nitrile + H2O. With respect to regulation, active when the heme iron is in the ferrous state. Activated by FMN, Fe(2+), Sn(2+), Na(2)SO(3), Na(2)S and vitamin K3. Catalyzes the dehydration of aldoximes to their corresponding nitrile. Is active toward various arylalkyl- and alkyl-aldoximes, and to a lesser extent toward aryl-aldoximes. This is Aliphatic aldoxime dehydratase from Rhodococcus globerulus.